Here is a 689-residue protein sequence, read N- to C-terminus: Glycine--tRNA ligase beta subunit (689 aa).

This sequence belongs to the class-II aminoacyl-tRNA synthetase family. In terms of assembly, tetramer of two alpha and two beta subunits.

Its subcellular location is the cytoplasm. It carries out the reaction tRNA(Gly) + glycine + ATP = glycyl-tRNA(Gly) + AMP + diphosphate. This Dichelobacter nodosus (strain VCS1703A) protein is Glycine--tRNA ligase beta subunit.